Reading from the N-terminus, the 616-residue chain is Homeodomain-interacting protein kinase 4 (616 aa).

One can recognise a Protein kinase domain in the interval 11–347; sequence YDIIEVLGKG…PSAALRHPFV (337 aa). ATP contacts are provided by residues 17-25 and Lys40; that span reads LGKGTFGEV. Asp136 acts as the Proton acceptor in catalysis. Positions 487 to 616 are disordered; it reads HKARKAPAGS…SFLQHVGGHH (130 aa). Polar residues predominate over residues 497-512; it reads KSDSNFSNLIRLSQAS. The residue at position 512 (Ser512) is a Phosphoserine. Residues 542–560 show a composition bias toward basic and acidic residues; sequence REGDGPSIKDRPMDAERSG.

Belongs to the protein kinase superfamily. CMGC Ser/Thr protein kinase family. HIPK subfamily. In terms of processing, autophosphorylated.

The protein localises to the cytoplasm. It catalyses the reaction L-seryl-[protein] + ATP = O-phospho-L-seryl-[protein] + ADP + H(+). The catalysed reaction is L-threonyl-[protein] + ATP = O-phospho-L-threonyl-[protein] + ADP + H(+). In terms of biological role, protein kinase that phosphorylates TP53, and thus induces TP53 repression of BIRC5 promoter. May act as a corepressor of transcription factors (Potential). This chain is Homeodomain-interacting protein kinase 4 (Hipk4), found in Rattus norvegicus (Rat).